The chain runs to 961 residues: Phosphofurin acidic cluster sorting protein 1 (961 aa).

Gly residues predominate over residues 1–19 (MAERGGAGGGPGGAGGGSS). 2 disordered regions span residues 1–70 (MAER…SSST) and 76–95 (VAVA…RTPA). Ala2 is subject to N-acetylalanine. Positions 20-30 (QRGSGVAQSPQ) are enriched in low complexity. At Ser28 the chain carries Phosphoserine. The span at 31–46 (QQPPQQPSQPQQPTPP) shows a compositional bias: pro residues. Position 44 is a phosphothreonine (Thr44). Low complexity predominate over residues 51-70 (ATSSSSSTSAAAASSSSSST). The residue at position 249 (Tyr249) is a Phosphotyrosine. The segment covering 260–271 (GIKSKLSDRSPD) has biased composition (basic and acidic residues). Disordered regions lie at residues 260-297 (GIKS…LHGQ) and 375-426 (NPSD…GKDT). The segment covering 274 to 291 (NYSEEEEESFSSEQEGSD) has biased composition (acidic residues). A coiled-coil region spans residues 351 to 375 (HVSREQIREVEEDLDELYDSLEMYN). Phosphoserine is present on residues Ser377 and Ser379. Residues 404-426 (MSQSSSQTEIGSLNSKGSLGKDT) show a composition bias toward polar residues. 2 positions are modified to phosphoserine: Ser428 and Ser493. Disordered stretches follow at residues 475 to 540 (EKVK…HSTQ) and 758 to 802 (SPST…SMSS). Phosphothreonine is present on Thr502. A phosphoserine mark is found at Ser517, Ser526, Ser527, Ser529, and Ser532. Residues 768 to 802 (SPVVSLTVPSTSPPSSSGLSRDATATPPSSPSMSS) are compositionally biased toward low complexity.

This sequence belongs to the PACS family. As to quaternary structure, associates with AP-1 and AP-3 but not with AP-2 complexes. Interacts with FURIN. Forms a ternary complex with furin and AP-1. Interacts with PKD2 (via acidic region). Interacts with SORL1. Interacts with WDR37.

It localises to the golgi apparatus. The protein resides in the trans-Golgi network. Its function is as follows. Coat protein that is involved in the localization of trans-Golgi network (TGN) membrane proteins that contain acidic cluster sorting motifs. Controls the endosome-to-Golgi trafficking of furin and mannose-6-phosphate receptor by connecting the acidic-cluster-containing cytoplasmic domain of these molecules with the adapter-protein complex-1 (AP-1) of endosomal clathrin-coated membrane pits. Required for normal ER Ca2+ handling in lymphocytes. Together with WDR37, it plays an essential role in lymphocyte development, quiescence and survival. Required for stabilizing peripheral lymphocyte populations. The polypeptide is Phosphofurin acidic cluster sorting protein 1 (Pacs1) (Rattus norvegicus (Rat)).